Reading from the N-terminus, the 31-residue chain is Photosystem I reaction center subunit XII (31 aa).

The chain crosses the membrane as a helical span at residues 7-26; the sequence is QVFLALIIALIPGILADRLG.

This sequence belongs to the PsaM family.

The protein localises to the plastid. It localises to the chloroplast thylakoid membrane. This is Photosystem I reaction center subunit XII from Euglena deses.